We begin with the raw amino-acid sequence, 562 residues long: SPI-1 type 3 secretion system secretin (562 aa).

The first 24 residues, 1-24 (MKTHILLARVLACAALVLVTPGYS), serve as a signal peptide directing secretion.

Belongs to the bacterial secretin family. T3SS SctC subfamily. The core secretion machinery of the T3SS is composed of approximately 20 different proteins, including cytoplasmic components, a base, an export apparatus and a needle. This subunit is part of the base, which anchors the injectisome in the bacterial cell envelope. Forms a stable homooligomeric complex. The complex is composed of 15 subunits.

Its subcellular location is the cell outer membrane. In terms of biological role, component of the type III secretion system (T3SS), also called injectisome, which is used to inject bacterial effector proteins into eukaryotic host cells. Forms a ring-shaped multimeric structure with an apparent central pore in the outer membrane. In Salmonella typhimurium (strain LT2 / SGSC1412 / ATCC 700720), this protein is SPI-1 type 3 secretion system secretin.